Here is a 72-residue protein sequence, read N- to C-terminus: uncharacterized protein (72 aa).

This is an uncharacterized protein from Acidianus filamentous virus 2 (isolate Italy/Pozzuoli) (AFV-2).